The chain runs to 339 residues: Store-operated calcium entry-associated regulatory factor (339 aa).

An N-terminal signal peptide occupies residues 1–30; sequence MAAACGPGAAGYCLLLGLHLFLLTAGPALG. Residues 31 to 173 lie on the Lumenal side of the membrane; that stretch reads WNDPDRMLLR…KWSSADSCNM (143 aa). The chain crosses the membrane as a helical span at residues 174–194; that stretch reads SGLITIVVLLGIAFVVYKLFL. Residues 195 to 339 are Cytoplasmic-facing; sequence SDGQYSPPPY…ASGYGGTRRR (145 aa). The span at 318–330 shows a compositional bias: polar residues; it reads SVCSNSDTKTRTA. A disordered region spans residues 318 to 339; the sequence is SVCSNSDTKTRTASGYGGTRRR.

This sequence belongs to the SARAF family. As to quaternary structure, interacts with STIM1; the interaction is inhibited by the interaction of STIM1 with EFHB. In terms of tissue distribution, highly expressed in macrophages.

Its subcellular location is the endoplasmic reticulum membrane. In terms of biological role, negative regulator of store-operated Ca(2+) entry (SOCE) involved in protecting cells from Ca(2+) overfilling. In response to cytosolic Ca(2+) elevation after endoplasmic reticulum Ca(2+) refilling, promotes a slow inactivation of STIM (STIM1 or STIM2)-dependent SOCE activity: possibly act by facilitating the deoligomerization of STIM to efficiently turn off ORAI when the endoplasmic reticulum lumen is filled with the appropriate Ca(2+) levels, and thus preventing the overload of the cell with excessive Ca(2+) ions. The sequence is that of Store-operated calcium entry-associated regulatory factor (SARAF) from Homo sapiens (Human).